The primary structure comprises 4644 residues: MSETGGGEDGSAGLEVSAVQNVADVSVLQKHLRKLVPLLLEDGGDAPAALEAALEEKSALEQMRKFLSDPQVHTVLVERSTLKEDVGDEGEEEKEFISYNINIDIHYGVKSNSLAFIKRAPVIDADKPVSSQLRVLTLSEDSPYETLHSFISNAVAPFFKSYIRESGKADRDGDKMAPSVEKKIAELEMGLLHLQQNIEIPEISLPIHPIITNVAKQCYERGEKPKVTDFGDKVEDPTFLNQLQSGVNRWIREIQKVTKLDRDPASGTALQEISFWLNLERALYRIQEKRESPEVLLTLDILKHGKRFHATVSFDTDTGLKQALETVNDYNPLMKDFPLNDLLSATELDKIRQALVAIFTHLRKIRNTKYPIQRALRLVEAISRDLSSQLLKVLGTRKLMHVAYEEFEKVMVACFEVFQTWDDEYEKLQVLLRDIVKRKREENLKMVWRINPAHRKLQARLDQMRKFRRQHEQLRAVIVRVLRPQVTAVAQQNQGEAPEPQDMKVAEVLFDAADANAIEEVNLAYENVKEVDGLDVSKEGTEAWEAAMKRYDERIDRVETRITARLRDQLGTAKNANEMFRIFSRFNALFVRPHIRGAIREYQTQLIQRVKDDIESLHDKFKVQYPQSQACKMSHVRDLPPVSGSIIWAKQIDRQLTAYMKRVEDVLGKGWENHVEGQKLKQDGDSFRMKLNTQEIFDDWARKVQQRNLGVSGRIFTIESARVRGRSGNVLKLKVNFLPEIITLSKEVRNLKWLGFRVPLAIVNKAHQANQLYPFAISLIESVRTYERTCEKVEERNTISLLVAGLKKEVQALIAEGIALVWESYKLDPYVQRLAETVFNFQEKVDDLLIIEEKIDLEVRSLETCMYDHKTFSEILNRVQKAVDDLNLHSYSNLPIWVNKLDMEIERILGVRLQAGLRAWTQVLLGQAEDKAEVDMDTDAPQVSHKPGGEPKIKNVVHELRITNQVIYLNPPIEECRYKLYQEMFAWKMIVLSLPRIQSQRYQVGVHYELTEEEKFYRNALTRSRDGPVALEESYSAVMGIVTEVEQYVKVWLQYQCLWDMQAENIYNRLGEDLSKWQALLVQIRRARGTFDNAETKKEFGPVVIDYGKVQSKVNLKYDSWHKEVLSKFGQMLGSNMTEFHSQISKSRQELEQHSVDTASTSDAVTFITYVQSLKRKIKQFEKQVELYRNGQRLLEKQRFQFPPSWLYIDNIEGEWGAFNDIMRRKDSAIQQQVANLQMKIVQEDRAVESRTTDLLTDWEKTKPVTGNLRPEEALQALTIYEGKFGRLKDDREKCAKAKEALELTDTGLLSGSEERVQVALEELQDLKGVWSELSKVWEQIDQMKEQPWVSVQPRKLRQNLDGLLNQLKNFPARLRQYASYEFVQRLLKGYMKINMLVIELKSEALKDRHWKQLMKRLHVNWVVSELTLGQIWDVDLQKNEAIVKDVLLVAQGEMALEEFLKQIREVWNTYELDLVNYQNKCRLIRGWDDLFNKVKEHINSVSAMKLSPYYKVFEEDALSWEDKLNRIMALFDVWIDVQRRWVYLEGIFTGSADIKHLLPVETQRFQSISTEFLALMKKVSKSPLVMDVLNIQGVQRSLERLADLLGKIQKALGEYLERERSSFPRFYFVGDEDLLEIIGNSKNVAKLQKHFKKMFAGVSSIILNEDSSVVLGISSREGEEVMFKTPVSITEHPKINEWLTLVEKEMRVTLAKLLAESVTEVEIFGKATSIDPNTYITWIDKYQAQLVVLSAQIAWSENVENALSNVGGGGNVGPLQSVLSNVEVTLNVLADSVLMEQPPLRRRKLEHLITELVHQRDVTRSLIKSKIDNAKSFEWLSQMRFYFDPKQTDVLQQLSIQMANAKFNYGFEYLGVQDKLVQTPLTDRCYLTMTQALEARLGGSPFGPAGTGKTESVKALGHQLGRFVLVFNCDETFDFQAMGRIFVGLCQVGAWGCFDEFNRLEERMLSAVSQQVQCIQEALREHSNPNYDKTSAPITCELLNKQVKVSPDMAIFITMNPGYAGRSNLPDNLKKLFRSLAMTKPDRQLIAQVMLYSQGFRTAEVLANKIVPFFKLCDEQLSSQSHYDFGLRALKSVLVSPGNVKRERIQKIKREKEERGEAVDEGEIAENLPEQEILIQSFCETMVPKLVAEDIPLLFSLLSDVFPGVQYHRGEMTDLREELKKVCKEMYLTYGDGEEVGGMWVEKVLQLYQITQINHGLMMVGPSGSGKSMAWRVLLKALERLEGVEGVAHIIDPKAISKDHLYGTLDPNTREWTDGLFTHVLRKIIDNVRGELQKRQWIVFDGDVDPEWVENLNSVLDDNKLLTLPNGERLSLPPNVRIMFEVQDLKYATLATVSRCGMVWFSEDLLSTDMIFNNFLARLRTIPLDEGEDEAQRRRKGKEDEGEEAASPMLQIQRDAATIMQPYFTSNGLVTKALEHAFKLEHIMDLTRLRCLGSLFSMLHQGCRNVAQYNANHPDFPMQIEQLERYIQRYLVYAILWSLSGDSRLKMRAELGEYIRRITTVPLPTAPNIPIIDYEVSISGEWSPWQAKVPQIEVETHKVAAPDVVVPTLDTVRHEALLYTWLAEHKPLVLCGPPGSGKTMTLFSALRALPDMEVVGLNFSSATTPELLLKTFDHYCEYRRTPNGVVLAPVQLGKWLVLFCDEINLPDMDKYGTQRVISFIRQMVEHGGFYRTSDQTWVKLERIQFVGACNPPTDPGRKPLSHRFLRHVPVVYVDYPGPASLTQIYGTFNRAMLRLIPSLRTYAEPLTAAMVEFYTMSQERFTQDTQPHYIYSPREMTRWVRGIFEALRPLETLPVEGLIRIWAHEALRLFQDRLVEDEERRWTDENIDMVALKHFPNIDKEKAMSRPILYSNWLSKDYIPVDQEELRDYVKARLKVFYEEELDVPLVLFNEVLDHVLRIDRIFRQPQGHLLLIGVSGAGKTTLSRFVAWMNGLSVYQIKVHRKYTGEDFDEDLRTVLRRSGCKNEKIAFIMDESNVLDSGFLERMNTLLANGEVPGLFEGDEYATLMTQCKEGAQKEGLMLDSHEELYKWFTSQVIRNLHVVFTMNPSSEGLKDRAATSPALFNRCVLNWFGDWSTEALYQVGKEFTSKMDLEKPNYIVPDYMPVVYDKLPQPPTHREAIVNSCVFVHQTLHQANARLAKRGGRTMAITPRHYLDFINHYANLFHEKRSELEEQQMHLNVGLRKIKETVDQVEELRRALRIKSQELEVKNAAANDKLKKMVKDQQEAEKKKVMSQEIQEQLHKQQEVIADKQMSVKEDLDKVEPAVIEAQNAVKSIKKQHLVEVRSMANPPAAVKLALESICLLLGESTTDWKQIRSIIMRENFIPTIVNFSAEEISDAIREKMKKNYMSNPSYNYEIVNRASLACGPMVKWAIAQLNYADMLKRVEPLRNELQKLEDDAKDNQQKANEVEQMIRDLEASIARYKEEYAVLISEAQAIKADLAAVEAKVNRSTALLKSLSAERERWEKTSETFKNQMSTIAGDCLLSAAFIAYAGYFDQQMRQNLFTTWSHHLQQANIQFRTDIARTEYLSNADERLRWQASSLPADDLCTENAIMLKRFNRYPLIIDPSGQATEFIMNEYKDRKITRTSFLDDAFRKNLESALRFGNPLLVQDVESYDPVLNPVLNREVRRTGGRVLITLGDQDIDLSPSFVIFLSTRDPTVEFPPDLCSRVTFVNFTVTRSSLQSQCLNEVLKAERPDVDEKRSDLLKLQGEFQLRLRQLEKSLLQALNEVKGRILDDDTIITTLENLKREAAEVTRKVEETDIVMQEVETVSQQYLPLSTACSSIYFTMESLKQVHFLYQYSLQFFLDIYHNVLYENPNLKGATDHTQRLSVITKDLFQVAFNRVARGMLHQDHITFAMLLARIKLKGTMGEPTYDAEFQHFLRGKEIVLSAGSTPKVQGLTVEQAEAVARLSCLPAFKDLIAKVQADEQFGIWLESSSPEQTVPYLWTEETPATPIGQAIHRLLLIQAFRPDRLLAMAHMFVSTNLGESFMSIMEQPLDLTHIVGTEVKPNTPVLMCSVPGYDASGHVEDLAAEQNTQITSIAIGSAEGFNQADKAINTAVKSGRWVMLKNVHLAPGWLMQLEKKLHSLQPHACFRLFLTMEINPRVPVNLLRAGRIFVFEPPPGVKANMLRTFSSIPVSRMCKSPNERARLYFLLAWFHAVIQERLRYAPLGWSKKYEFGESDLRSACDTVDTWLDDTAKGRQNISPDKIPWSALKTLMAQSIYGGRVDNEFDQRLLNTFLERLFTTRSFDSEFKLACKVDGHKDIQMPDGIRREEFVQWVELLPDAQTPSWLGLPNNAERVLLTTQGVDMISKMLKMQMLEDEDDLAYAETEKKTRTDFTSDGRPAWMRTLHTTASNWLHLIPQTLSPLKRTVENIKDPLFRFFEREVKMGAKLLQDVRQDLADVVQVCEGKKKQTNYLRTLINELVKGILPRSWSHYTVPAGMTVIQWVSDFSERIKQLQNISQAAAAGGAKELKNIHVCLGALFVPEAYITATRQYVAQANSWSLEELCLEVNVTASQSTTLDACSFGVTGLKLQGATCSNNKLSLSNAISTVLPLTQLRWGKQTSAEKKASVVTLPVYLNFTRADLIFTVDFEIATKEDPRSFYERGVAVLCTE.

The residue at position 2 (S2) is an N-acetylserine. Residues 2–1865 (SETGGGEDGS…SIQMANAKFN (1864 aa)) are stem. Coiled-coil stretches lie at residues 48–69 (AALE…FLSD), 179–200 (SVEK…NIEI), 453–476 (AHRK…QLRA), and 541–564 (TEAW…RITA). At S68 the chain carries Phosphoserine. Positions 446-701 (MVWRINPAHR…NTQEIFDDWA (256 aa)) are interaction with DYNC1I2. An interaction with DYNC1LI2 region spans residues 649–800 (AKQIDRQLTA…EKVEERNTIS (152 aa)). Position 1123 is an N6-acetyllysine (K1123). Residues 1169-1201 (TYVQSLKRKIKQFEKQVELYRNGQRLLEKQRFQ) adopt a coiled-coil conformation. S1228 is modified (phosphoserine). Coiled-coil stretches lie at residues 1229 to 1250 (AIQQ…AVES) and 1355 to 1371 (RKLR…LKNF). AAA regions lie at residues 1866–2097 (YGFE…VLVS), 2178–2450 (EELK…LTRL), 2554–2803 (EVET…WVRG), and 2897–3166 (VFYE…GGRT). ATP contacts are provided by residues 1904–1911 (GPAGTGKT) and 2222–2229 (GPSGSGKS). The segment at 2389–2409 (EDEAQRRRKGKEDEGEEAASP) is disordered. ATP is bound by residues 2593–2600 (GPPGSGKT) and 2935–2942 (GVSGAGKT). Coiled-coil stretches lie at residues 3187-3273 (EKRS…ADKQ), 3394-3498 (AIAQ…KNQM), and 3735-3798 (EFQL…VSQQ). A stalk region spans residues 3187-3498 (EKRSELEEQQ…KTSETFKNQM (312 aa)). An N6-acetyllysine modification is found at K3478. 2 AAA regions span residues 3551-3780 (LSNA…EVTR) and 4003-4219 (AHMF…TVDT). S4160 carries the phosphoserine modification. An N6-acetyllysine modification is found at K4281. T4364 is modified (phosphothreonine).

It belongs to the dynein heavy chain family. Homodimer. The cytoplasmic dynein 1 complex consists of two catalytic heavy chains (HCs) and a number of non-catalytic subunits presented by intermediate chains (ICs), light intermediate chains (LICs) and light chains (LCs); the composition seems to vary in respect to the IC, LIC and LC composition. The heavy chain homodimer serves as a scaffold for the probable homodimeric assembly of the respective non-catalytic subunits. The ICs and LICs bind directly to the HC dimer and dynein LCs assemble on the IC dimer. Interacts with DYNC1LI1; DYNC1LI1 and DYNC1LI2 bind mutually exclusive to DYNC1H1. Interacts with DYNC1LI2; DYNC1LI1 and DYNC1LI2 bind mutually exclusive to DYNC1H1. Interacts with DYNC1I2. Interacts with BICD2. Interacts with DNALI1.

The protein localises to the cytoplasm. It is found in the cytoskeleton. In terms of biological role, cytoplasmic dynein 1 acts as a motor for the intracellular retrograde motility of vesicles and organelles along microtubules. Dynein has ATPase activity; the force-producing power stroke is thought to occur on release of ADP. Plays a role in mitotic spindle assembly and metaphase plate congression. This is Cytoplasmic dynein 1 heavy chain 1 (Dync1h1) from Rattus norvegicus (Rat).